A 1188-amino-acid chain; its full sequence is DNA polymerase (1188 aa).

The tract at residues 1–74 is disordered; that stretch reads MALVPSPRAG…PAANNVSLTP (74 aa). Positions 31–41 are enriched in low complexity; it reads STAGAAPTATR.

This sequence belongs to the DNA polymerase type-B family. In terms of assembly, heterodimer with the terminal protein; this heterodimer binds to bp 9 to 18 of the genome. Forms a complex with viral pTP, DBP and hosts NFIA and POU2F1/OCT1 for initiation of replication.

It is found in the host nucleus. It catalyses the reaction DNA(n) + a 2'-deoxyribonucleoside 5'-triphosphate = DNA(n+1) + diphosphate. In terms of biological role, eukaryotic-type DNA polymerase involved in viral genomic replication. DNA synthesis is protein primed, and acts in a strand displacement replication. Assembles in complex with viral pTP, DBP, host NFIA and host POU2F1/OCT1 on viral origin of replication. The polymerase covalently transfers dCMP onto pTP, thereby initiating complementary strand synthesis. The chain is DNA polymerase from Human adenovirus F serotype 40 (HAdV-40).